A 314-amino-acid polypeptide reads, in one-letter code: N-myc-interactor (314 aa).

The segment at 1-24 is disordered; that stretch reads MDADKDNIKQACDERSAEMDDMRG. Ser16 bears the Phosphoserine mark. A coiled-coil region spans residues 31-65; sequence VHEIMSENKELDEEIKKLEAELQSDAREFQIKENV. 2 consecutive NID domains span residues 104-193 and 202-293; these read GQAL…GEVE and RSAV…EVEV.

It belongs to the NMI family. In terms of assembly, interacts with MYCN and MYC, as well as with other transcription factors with a Zip, HLH or a HLH-Zip motif. Interacts with all STAT proteins except STAT2. Interacts with IRF7, the interaction is direct and leads to the inhibition of IRF7-mediated type I IFN production. Interacts (via coiled-coil domain) with TRIM21 (via the SPRY domain); the interaction leads to 'Lys-63'-linked ubiquitination of NMI. Interacts with IFI35; the interaction is direct and is facilitated by TRIM21. Interacts with TLR4; the interaction is direct and leads to NF-kappa-B activation. In terms of processing, may be ubiquitinated. Expressed in macrophages.

It is found in the cytoplasm. The protein resides in the nucleus. The protein localises to the secreted. In terms of biological role, acts as a signaling pathway regulator involved in innate immune system response. In response to interleukin 2/IL2 and interferon IFN-gamma/IFNG, interacts with signal transducer and activator of transcription/STAT which activate the transcription of downstream genes involved in a multitude of signals for development and homeostasis. Enhances the recruitment of CBP/p300 coactivators to STAT1 and STAT5, resulting in increased STAT1- and STAT5-dependent transcription. In response to interferon IFN-alpha, associates in a complex with transcriptional regulator IFI35 to regulate immune response; the complex formation prevents proteasome-mediated degradation of IFI35. In complex with IFI35, negatively regulates nuclear factor NF-kappa-B signaling by inhibiting the nuclear translocation, activation and transcription of NF-kappa-B subunit p65/RELA, resulting in the inhibition of endothelial cell proliferation, migration and re-endothelialization of injured arteries. Negatively regulates virus-triggered type I interferon/IFN production by inducing proteosome-dependent degradation of IRF7, a transcriptional regulator of type I IFN, thereby interfering with cellular antiviral responses. Beside its role as an intracellular signaling pathway regulator, also functions extracellularly as damage-associated molecular patterns (DAMPs) to promote inflammation, when actively released by macrophage to the extracellular space during cell injury or pathogen invasion. Macrophage-secreted NMI activates NF-kappa-B signaling in adjacent macrophages through Toll-like receptor 4/TLR4 binding and activation, thereby inducing NF-kappa-B translocation from the cytoplasm into the nucleus which promotes the release of pro-inflammatory cytokines. The polypeptide is N-myc-interactor (Mus musculus (Mouse)).